A 249-amino-acid polypeptide reads, in one-letter code: U2 small nuclear ribonucleoprotein A' (249 aa).

4 LRR repeats span residues 20–41, 43–64, 65–87, and 89–110; these read KERE…GATE, QFDT…PYLN, RLGT…GEFL, and KLHS…DPLA. The 39-residue stretch at 123–161 folds into the LRRCT domain; that stretch reads NNITKKANYRLYVIHKLKSLRVLDFIKIKAKERAEAASL.

Belongs to the U2 small nuclear ribonucleoprotein A family.

The protein resides in the nucleus. It localises to the nucleus speckle. This protein is associated with sn-RNP U2. It helps the A' protein to bind stem loop IV of U2 snRNA. The chain is U2 small nuclear ribonucleoprotein A' from Arabidopsis thaliana (Mouse-ear cress).